The following is a 450-amino-acid chain: Hyaluronidase-1 (450 aa).

The signal sequence occupies residues 1-35; that stretch reads MRPFSLEVSLHLPWAMAAHLLPVCTLFLNLLSMTQ. 2 cysteine pairs are disulfide-bonded: C58-C348 and C222-C236. N-linked (GlcNAc...) asparagine glycosylation occurs at N85. The Proton donor role is filled by E146. Residues N231 and N365 are each glycosylated (N-linked (GlcNAc...) asparagine). Intrachain disulfides connect C373/C384, C378/C433, and C435/C444. Residue N398 is glycosylated (N-linked (GlcNAc...) asparagine). Positions 433 to 444 constitute an EGF-like domain; it reads CRCYRGWRGTRC.

Belongs to the glycosyl hydrolase 56 family.

The protein resides in the secreted. The protein localises to the lysosome. The enzyme catalyses Random hydrolysis of (1-&gt;4)-linkages between N-acetyl-beta-D-glucosamine and D-glucuronate residues in hyaluronate.. In terms of biological role, may have a role in promoting tumor progression. May block the TGFB1-enhanced cell growth. This Bos taurus (Bovine) protein is Hyaluronidase-1 (HYAL1).